The primary structure comprises 206 residues: Inosine triphosphate pyrophosphatase (206 aa).

21 to 26 (TGNAKK) contributes to the ITP binding site. Mg(2+) is bound at residue glutamate 49. Residues lysine 61, 77–78 (DT), lysine 94, 153–156 (FGWD), lysine 176, and 181–182 (HR) each bind ITP.

This sequence belongs to the HAM1 NTPase family. As to quaternary structure, homodimer. The cofactor is Mg(2+). It depends on Mn(2+) as a cofactor.

It localises to the cytoplasm. It carries out the reaction ITP + H2O = IMP + diphosphate + H(+). The catalysed reaction is dITP + H2O = dIMP + diphosphate + H(+). It catalyses the reaction XTP + H2O = XMP + diphosphate + H(+). In terms of biological role, pyrophosphatase that hydrolyzes non-canonical purine nucleotides such as inosine triphosphate (ITP), deoxyinosine triphosphate (dITP) or xanthosine 5'-triphosphate (XTP) to their respective monophosphate derivatives. The enzyme does not distinguish between the deoxy- and ribose forms. Probably excludes non-canonical purines from RNA and DNA precursor pools, thus preventing their incorporation into RNA and DNA and avoiding chromosomal lesions. The polypeptide is Inosine triphosphate pyrophosphatase (Vitis vinifera (Grape)).